We begin with the raw amino-acid sequence, 81 residues long: Polcalcin Syr v 3 (81 aa).

2 consecutive EF-hand domains span residues 3 to 38 (EEVAELERIFKRFDANGDGKISSSELGETLKTLGSV) and 41 to 73 (EEIQRMMAEIDTDGDGFISFEEFKDFARANSGL). Residues Asp-16, Asn-18, Asp-20, Lys-22, Glu-27, Asp-51, Asp-53, Asp-55, and Glu-62 each coordinate Ca(2+).

This Syringa vulgaris (Common lilac) protein is Polcalcin Syr v 3 (SYRV3).